The primary structure comprises 435 residues: Evolutionarily conserved signaling intermediate in Toll pathway, mitochondrial (435 aa).

Residues 1–48 constitute a mitochondrion transit peptide; it reads MSWVQVNLLVRSLSRGWGGLCRPALSGTPFAQVSLQALRGLHCSAATH. A Glycyl lysine isopeptide (Lys-Gly) (interchain with G-Cter in ubiquitin) cross-link involves residue lysine 372. Residues 401–435 form a disordered region; the sequence is LTTSRLEGQSPPHSPPKGPEEDDETIQAEQQQGQS.

It belongs to the ECSIT family. As to quaternary structure, interacts with MAP3K1, SMAD4 and TRAF6. Interacts with SMAD1 only after BMP4-treatment. Part of the mitochondrial complex I assembly/MCIA complex that comprises at least the core subunits TMEM126B, NDUFAF1, ECSIT and ACAD9 and complement subunits such as COA1 and TMEM186. Interacts with NDUFAF1. Interacts with ACAD9. Interacts with TRIM59. Interacts with TMEM70 and TMEM242. Interacts (when ubiquitinated) with NF-kappa-B subunits RELA and NFKB1. Interacts with RIGI, IFIT1 and MAVS; these interactions promote RLR-mediated type I IFN induction. Interacts with SQSTM1; this interaction inhibits TLR4 signaling via functional regulation of the TRAF6-ECSIT complex. Interacts with cereblon/CRBN; this interaction inhibits the ubiquitination of ECSIT. Post-translationally, ubiquitinated on Lys-372; leading to translocation in the nucleus together with RELA and NFKB1 and expression of NF-kappa-B-dependent genes. In terms of tissue distribution, detected in heart, brain, lung, liver, skeletal muscle, kidney and testis. Detected in embryonic mesoderm and epiblast, and in extraembryonic ectoderm.

It is found in the cytoplasm. The protein resides in the nucleus. The protein localises to the mitochondrion. Functionally, adapter protein that plays a role in different signaling pathways including TLRs and IL-1 pathways or innate antiviral induction signaling. Plays a role in the activation of NF-kappa-B by forming a signal complex with TRAF6 and TAK1/MAP3K7 to activate TAK1/MAP3K7 leading to activation of IKKs. Once ubiquitinated, interacts with the dissociated RELA and NFKB1 proteins and translocates to the nucleus where it induces NF-kappa-B-dependent gene expression. Plays a role in innate antiviral immune response by bridging the pattern recognition receptors RIGI and MDA5/IFIT1 to the MAVS complex at the mitochondrion. Promotes proteolytic activation of MAP3K1. Involved in the BMP signaling pathway. Required for normal embryonic development. As part of the MCIA complex, involved in the assembly of the mitochondrial complex I. The protein is Evolutionarily conserved signaling intermediate in Toll pathway, mitochondrial of Mus musculus (Mouse).